The following is a 149-amino-acid chain: Aquaporin-like protein 2 (149 aa).

A disordered region spans residues 1–35 (MSNESNDLEKNISHLDPTGVDNAYIPPEQPETKHS). Over 1 to 47 (MSNESNDLEKNISHLDPTGVDNAYIPPEQPETKHSRFNIDRGTLRNH) the chain is Cytoplasmic. The chain crosses the membrane as a helical span at residues 48–68 (FIAAVGEFCGTFMFLWCAYVI). Over 69 to 89 (CNVANHDVALTTEPEGSHPGQ) the chain is Extracellular. Residues 90 to 110 (LIMIALGFGFSVMFSIWCFWW) form a helical membrane-spanning segment. Residues 111 to 149 (GFEPSRFSLFVFGQSHLTSQMCSDVVSSDHCWDGCWWCR) are Cytoplasmic-facing.

Belongs to the MIP/aquaporin (TC 1.A.8) family.

The protein resides in the endoplasmic reticulum membrane. The protein localises to the cell membrane. Its function is as follows. Water channel required to facilitate the transport of water across membranes. Involved in freeze tolerance, osmotolerance and cell flocculation in liquid cultures. Is non-functional in most laboratory strains. The chain is Aquaporin-like protein 2 (AQY2-2) from Saccharomyces cerevisiae (strain Lalvin EC1118 / Prise de mousse) (Baker's yeast).